We begin with the raw amino-acid sequence, 164 residues long: Protein 4 (164 aa).

In Lettuce big-vein associated virus (isolate Japan/Kagawa) (LBVaV), this protein is Protein 4.